A 414-amino-acid chain; its full sequence is Serine hydroxymethyltransferase (414 aa).

(6S)-5,6,7,8-tetrahydrofolate-binding positions include leucine 121 and 125–127 (GHL). Lysine 229 carries the post-translational modification N6-(pyridoxal phosphate)lysine.

The protein belongs to the SHMT family. In terms of assembly, homodimer. The cofactor is pyridoxal 5'-phosphate.

Its subcellular location is the cytoplasm. The enzyme catalyses (6R)-5,10-methylene-5,6,7,8-tetrahydrofolate + glycine + H2O = (6S)-5,6,7,8-tetrahydrofolate + L-serine. It functions in the pathway one-carbon metabolism; tetrahydrofolate interconversion. The protein operates within amino-acid biosynthesis; glycine biosynthesis; glycine from L-serine: step 1/1. Functionally, catalyzes the reversible interconversion of serine and glycine with tetrahydrofolate (THF) serving as the one-carbon carrier. This reaction serves as the major source of one-carbon groups required for the biosynthesis of purines, thymidylate, methionine, and other important biomolecules. Also exhibits THF-independent aldolase activity toward beta-hydroxyamino acids, producing glycine and aldehydes, via a retro-aldol mechanism. In Polaromonas naphthalenivorans (strain CJ2), this protein is Serine hydroxymethyltransferase.